The primary structure comprises 641 residues: Methylenetetrahydrofolate reductase 2 (641 aa).

Glu-20 acts as the Proton donor/acceptor in catalysis. Residues 20–25 (EYFPPK) and 52–53 (TW) contribute to the NAD(+) site. Residues 52–53 (TW), His-81, 111–113 (RGD), Tyr-153, Asp-172, and Lys-179 contribute to the FAD site. Asp-113 serves as a coordination point for substrate. Residue Gln-190 participates in substrate binding.

The protein belongs to the methylenetetrahydrofolate reductase family. FAD is required as a cofactor.

It catalyses the reaction (6S)-5-methyl-5,6,7,8-tetrahydrofolate + NADP(+) = (6R)-5,10-methylene-5,6,7,8-tetrahydrofolate + NADPH + H(+). It functions in the pathway one-carbon metabolism; tetrahydrofolate interconversion. Major methylenetetrahydrofolate reductase required to generate the methyl groups necessary for methionine synthetase to convert homocysteine to methionine. Performs 15 to 20 percent of the total methylenetetrahydrofolate reductase activity of the cells. The protein is Methylenetetrahydrofolate reductase 2 (met11) of Schizosaccharomyces pombe (strain 972 / ATCC 24843) (Fission yeast).